The following is a 131-amino-acid chain: Small ribosomal subunit protein uS9 (131 aa).

Belongs to the universal ribosomal protein uS9 family.

The sequence is that of Small ribosomal subunit protein uS9 from Actinobacillus pleuropneumoniae serotype 5b (strain L20).